A 480-amino-acid chain; its full sequence is Glycogen synthase (480 aa).

Residue Lys-15 coordinates ADP-alpha-D-glucose.

Belongs to the glycosyltransferase 1 family. Bacterial/plant glycogen synthase subfamily.

The enzyme catalyses [(1-&gt;4)-alpha-D-glucosyl](n) + ADP-alpha-D-glucose = [(1-&gt;4)-alpha-D-glucosyl](n+1) + ADP + H(+). It participates in glycan biosynthesis; glycogen biosynthesis. In terms of biological role, synthesizes alpha-1,4-glucan chains using ADP-glucose. This Granulibacter bethesdensis (strain ATCC BAA-1260 / CGDNIH1) protein is Glycogen synthase.